The primary structure comprises 332 residues: ATPase GET3 (332 aa).

Lys-32 to Thr-39 lines the ATP pocket. The active site involves Asp-61. Glu-235 and Asn-262 together coordinate ATP. Positions 273 and 276 each coordinate Zn(2+).

The protein belongs to the arsA ATPase family. Homodimer.

Its subcellular location is the cytoplasm. It is found in the endoplasmic reticulum. ATPase required for the post-translational delivery of tail-anchored (TA) proteins to the endoplasmic reticulum. Recognizes and selectively binds the transmembrane domain of TA proteins in the cytosol. This complex then targets to the endoplasmic reticulum by membrane-bound receptors, where the tail-anchored protein is released for insertion. This process is regulated by ATP binding and hydrolysis. ATP binding drives the homodimer towards the closed dimer state, facilitating recognition of newly synthesized TA membrane proteins. ATP hydrolysis is required for insertion. Subsequently, the homodimer reverts towards the open dimer state, lowering its affinity for the membrane-bound receptor, and returning it to the cytosol to initiate a new round of targeting. The polypeptide is ATPase GET3 (Mycosarcoma maydis (Corn smut fungus)).